Here is a 284-residue protein sequence, read N- to C-terminus: Bifunctional protein FolD (284 aa).

NADP(+)-binding positions include 165-167 (GRS), S190, and V231.

Belongs to the tetrahydrofolate dehydrogenase/cyclohydrolase family. Homodimer.

The catalysed reaction is (6R)-5,10-methylene-5,6,7,8-tetrahydrofolate + NADP(+) = (6R)-5,10-methenyltetrahydrofolate + NADPH. The enzyme catalyses (6R)-5,10-methenyltetrahydrofolate + H2O = (6R)-10-formyltetrahydrofolate + H(+). It participates in one-carbon metabolism; tetrahydrofolate interconversion. In terms of biological role, catalyzes the oxidation of 5,10-methylenetetrahydrofolate to 5,10-methenyltetrahydrofolate and then the hydrolysis of 5,10-methenyltetrahydrofolate to 10-formyltetrahydrofolate. The sequence is that of Bifunctional protein FolD from Brevibacillus brevis (strain 47 / JCM 6285 / NBRC 100599).